Here is a 571-residue protein sequence, read N- to C-terminus: Hemagglutinin-neuraminidase (571 aa).

At 1 to 26 (MDRAVNRVVLENEEREAKNTWRLVFR) the chain is on the intravirion side. Residues 27-47 (IAVLLLMVMTLAISAAALVYS) traverse the membrane as a helical segment. Over 48 to 571 (MGASTPRDLA…LVEILKDDRV (524 aa)) the chain is Virion surface. Residue Asn-119 is glycosylated (N-linked (GlcNAc...) asparagine; by host). Positions 124–152 (GEPVHDPDYIGGIGKELIVDDISDVTSFY) are important for interaction with fusion/F protein. 3 disulfide bridges follow: Cys-172–Cys-196, Cys-186–Cys-247, and Cys-238–Cys-251. The interval 234–239 (NRKSCS) is involved in neuraminidase activity. Residues Asn-341 and Asn-433 are each glycosylated (N-linked (GlcNAc...) asparagine; by host). 2 cysteine pairs are disulfide-bonded: Cys-344–Cys-461 and Cys-455–Cys-465. N-linked (GlcNAc...) asparagine; by host glycosylation is found at Asn-481, Asn-508, and Asn-538. An intrachain disulfide couples Cys-531 to Cys-542.

Belongs to the paramyxoviruses hemagglutinin-neuraminidase family. In terms of assembly, homotetramer; composed of disulfide-linked homodimers. Interacts with F protein trimer. Interacts with host CG-1B; this interaction inhibits viral adsorption and replication rather than internalization.

The protein resides in the virion membrane. The protein localises to the host cell membrane. It carries out the reaction Hydrolysis of alpha-(2-&gt;3)-, alpha-(2-&gt;6)-, alpha-(2-&gt;8)- glycosidic linkages of terminal sialic acid residues in oligosaccharides, glycoproteins, glycolipids, colominic acid and synthetic substrates.. In terms of biological role, mediates the viral entry into the host cell together with fusion/F protein. Attaches the virus to sialic acid-containing cell receptors and thereby initiates infection. Binding of HN protein to the receptor induces a conformational change that allows the F protein to trigger virion/cell membranes fusion. Functionally, neuraminidase activity ensures the efficient spread of the virus by dissociating the mature virions from the neuraminic acid containing glycoproteins. This is Hemagglutinin-neuraminidase (HN) from Gallus gallus (Chicken).